Reading from the N-terminus, the 403-residue chain is Acetate kinase (403 aa).

Position 7 (N7) interacts with Mg(2+). K14 contributes to the ATP binding site. R90 contacts substrate. D147 (proton donor/acceptor) is an active-site residue. Residues H207–G211, D283–R285, and G331–N335 each bind ATP. Position 386 (E386) interacts with Mg(2+).

The protein belongs to the acetokinase family. As to quaternary structure, homodimer. The cofactor is Mg(2+). Mn(2+) serves as cofactor.

It localises to the cytoplasm. The catalysed reaction is acetate + ATP = acetyl phosphate + ADP. The protein operates within metabolic intermediate biosynthesis; acetyl-CoA biosynthesis; acetyl-CoA from acetate: step 1/2. Catalyzes the formation of acetyl phosphate from acetate and ATP. Can also catalyze the reverse reaction. The polypeptide is Acetate kinase (Thermotoga sp. (strain RQ2)).